A 330-amino-acid chain; its full sequence is DNA-directed RNA polymerase subunit alpha (330 aa).

Residues 1 to 229 (MKNIKFIKPF…DHFNVLVELS (229 aa)) are alpha N-terminal domain (alpha-NTD). The interval 245 to 330 (AHNSVLDLEI…HSVEEDKDKH (86 aa)) is alpha C-terminal domain (alpha-CTD).

It belongs to the RNA polymerase alpha chain family. In terms of assembly, homodimer. The RNAP catalytic core consists of 2 alpha, 1 beta, 1 beta' and 1 omega subunit. When a sigma factor is associated with the core the holoenzyme is formed, which can initiate transcription.

The catalysed reaction is RNA(n) + a ribonucleoside 5'-triphosphate = RNA(n+1) + diphosphate. Its function is as follows. DNA-dependent RNA polymerase catalyzes the transcription of DNA into RNA using the four ribonucleoside triphosphates as substrates. The polypeptide is DNA-directed RNA polymerase subunit alpha (Onion yellows phytoplasma (strain OY-M)).